We begin with the raw amino-acid sequence, 85 residues long: Large ribosomal subunit protein bL27 (85 aa).

A compositionally biased stretch (polar residues) spans 1 to 11 (MASKASGGSTR). A disordered region spans residues 1–20 (MASKASGGSTRNGRDSISKR).

Belongs to the bacterial ribosomal protein bL27 family.

In Sulfurihydrogenibium sp. (strain YO3AOP1), this protein is Large ribosomal subunit protein bL27.